The chain runs to 262 residues: MTETAIPDVQSSPDKRHIAINRVGIRDLRLPLFIENAAGEAMPTVARAALMVALPHTQKGTHMSRFIRLLDLKTPISVSALPTLHQKMLDTLHAEEGTISLSFPFFIEKSAPVSGEKALLDYEVVLAVDGNRKHVEVSVEVTVPVTSLCPCSKEISQYGAHNQRSHIVIYAQYNPNQPFSIEDLIHIAEEGASCPIWSLLKRPDEKYITERAYEHPKFVEDIVRDIAMVLNDDPRISFYRISSENFESIHNHSAFALIEHQK.

This sequence belongs to the GTP cyclohydrolase IV family.

It catalyses the reaction GTP + H2O = 7,8-dihydroneopterin 3'-triphosphate + formate + H(+). The protein operates within cofactor biosynthesis; 7,8-dihydroneopterin triphosphate biosynthesis; 7,8-dihydroneopterin triphosphate from GTP: step 1/1. Functionally, converts GTP to 7,8-dihydroneopterin triphosphate. The chain is GTP cyclohydrolase FolE2 from Dichelobacter nodosus (strain VCS1703A).